A 71-amino-acid chain; its full sequence is uncharacterized protein (71 aa).

A helical transmembrane segment spans residues 12–34 (YLYNYFSSTTSWLVFIILSLDTI).

The protein resides in the membrane. This is an uncharacterized protein from Schizosaccharomyces pombe (strain 972 / ATCC 24843) (Fission yeast).